Consider the following 488-residue polypeptide: MQYRDLRDFIRGLEQRGELKRIQVPISPVLEMTEVCDRTLRAKGPALLFEKPTGFDIPVLGNLFGTPERVAMGMGAESVDELREIGKLLAFLKEPEPPKGLKDAWSKLPIFKKVVSMAPKVVKDAVCQEVVVEGDDVDLGALPIQHCWPGDVAPLITWGLTVTRGPNKDRQNLGIYRQQVIGRNKVIMRWLSHRGGALDYREWCEKNPGQPFPVAVALGADPATILGAVTPVPDTLSEYAFAGLLRGNRTELVKCRGSNLQVPATAEIILEGVIHPGEMAPEGPYGDHTGYYNEVDSFPVFTVERITHRHKPIYHSTYTGRPPDEPAILGVALNEVFVPILQKQFPEITDFYLPPEGCSYRMAVVTMKKQYPGHAKRVMLGVWSFLRQFMYTKFVIVTDDDINARDWNDVIWAITTRMDPKRDTVMIDNTPIDYLDFASPVSGLGSKMGLDATHKWPGETTREWGRVIVKDEAVTRRIDELWDQLGID.

Asn-172 is a binding site for Mn(2+). Prenylated FMN contacts are provided by residues 175-177, 189-191, and 194-195; these read IYR, RWL, and RG. Mn(2+) is bound at residue Glu-238. Catalysis depends on Asp-287, which acts as the Proton donor.

Belongs to the UbiD family. Homohexamer. The cofactor is prenylated FMN. Mn(2+) serves as cofactor.

It is found in the cell membrane. The enzyme catalyses a 4-hydroxy-3-(all-trans-polyprenyl)benzoate + H(+) = a 2-(all-trans-polyprenyl)phenol + CO2. Its pathway is cofactor biosynthesis; ubiquinone biosynthesis. Functionally, catalyzes the decarboxylation of 3-octaprenyl-4-hydroxy benzoate to 2-octaprenylphenol, an intermediate step in ubiquinone biosynthesis. The polypeptide is 3-octaprenyl-4-hydroxybenzoate carboxy-lyase (Pseudomonas putida (strain GB-1)).